The following is a 91-amino-acid chain: Small ribosomal subunit protein bS16c (91 aa).

It belongs to the bacterial ribosomal protein bS16 family.

Its subcellular location is the plastid. The protein resides in the chloroplast. In Vitis vinifera (Grape), this protein is Small ribosomal subunit protein bS16c.